We begin with the raw amino-acid sequence, 704 residues long: Myb-related protein B (704 aa).

HTH myb-type domains follow at residues 26 to 77 (RDNR…LRVL), 78 to 133 (NPDL…NPEV), and 134 to 184 (KKSC…KRKV). The H-T-H motif DNA-binding region spans 54 to 77 (WKFLASHFPNRTDQQCQYRWLRVL). Residue K104 forms a Glycyl lysine isopeptide (Lys-Gly) (interchain with G-Cter in SUMO2) linkage. 2 DNA-binding regions (H-T-H motif) span residues 106–129 (WTLI…HNHL) and 157–180 (WAEI…NSTI). A Glycyl lysine isopeptide (Lys-Gly) (interchain with G-Cter in SUMO2) cross-link involves residue K197. T267 bears the Phosphothreonine mark. A Glycyl lysine isopeptide (Lys-Gly) (interchain with G-Cter in SUMO2) cross-link involves residue K275. S282 is subject to Phosphoserine. The interval 325-412 (LSKFDLPEEP…GSGIGTPPSV (88 aa)) is disordered. The span at 339-366 (SVVSSPVQPQTSQQQQEEALQSSQQAAT) shows a compositional bias: low complexity. S396 is subject to Phosphoserine. K414 participates in a covalent cross-link: Glycyl lysine isopeptide (Lys-Gly) (interchain with G-Cter in SUMO2). A phosphothreonine; by CDK2 mark is found at T443 and T447. Residues K450 and K485 each participate in a glycyl lysine isopeptide (Lys-Gly) (interchain with G-Cter in SUMO2) cross-link. T490 and T497 each carry phosphothreonine; by CDK2. Glycyl lysine isopeptide (Lys-Gly) (interchain with G-Cter in SUMO2) cross-links involve residues K502 and K513. Position 524 is a phosphothreonine; by CDK2 (T524). Residues K527, K537, and K550 each participate in a glycyl lysine isopeptide (Lys-Gly) (interchain with G-Cter in SUMO2) cross-link. S581 is modified (phosphoserine; by CDK2). Residues K588 and K600 each participate in a glycyl lysine isopeptide (Lys-Gly) (interchain with G-Cter in SUMO2) cross-link. The disordered stretch occupies residues 603–626 (SSTMPKPLSLPTSVTPSSCGFTSP). A compositionally biased stretch (low complexity) spans 607-620 (PKPLSLPTSVTPSS). Glycyl lysine isopeptide (Lys-Gly) (interchain with G-Cter in SUMO2) cross-links involve residues K629, K643, and K652.

Component of the DREAM complex (also named LINC complex) at least composed of E2F4, E2F5, LIN9, LIN37, LIN52, LIN54, MYBL1, MYBL2, RBL1, RBL2, RBBP4, TFDP1 and TFDP2. The complex exists in quiescent cells where it represses cell cycle-dependent genes. It dissociates in S phase when LIN9, LIN37, LIN52 and LIN54 form a subcomplex that binds to MYBL2. Interacts with CCNF (via the Cyclin N-terminal domain). Phosphorylated by cyclin A/CDK2 during S-phase. Phosphorylation at Thr-524 is probably involved in transcriptional activity.

It is found in the nucleus. Functionally, transcription factor involved in the regulation of cell survival, proliferation, and differentiation. Transactivates the expression of the CLU gene. The sequence is that of Myb-related protein B (Mybl2) from Mus musculus (Mouse).